The following is a 662-amino-acid chain: MSHVAVENALGLDQQFAGLDLNSSDNQSGGSTASKGRYIPPHLRNREATKGFYDKDSSGWSSSKDKDAYSSFGSRSDSRGKSSFFSDRGSGSRGRFDDRGRSDYDGIGSRGDRSGFGKFERGGNSRWCDKSDEDDWSKPLPPSERLEQELFSGGNTGINFEKYDDIPVEATGNNCPPHIESFSDVEMGEIIMGNIELTRYTRPTPVQKHAIPIIKEKRDLMACAQTGSGKTAAFLLPILSQIYSDGPGEALRAMKENGRYGRRKQYPISLVLAPTRELAVQIYEEARKFSYRSRVRPCVVYGGADIGQQIRDLERGCHLLVATPGRLVDMMERGKIGLDFCKYLVLDEADRMLDMGFEPQIRRIVEQDTMPPKGVRHTMMFSATFPKEIQMLARDFLDEYIFLAVGRVGSTSENITQKVVWVEESDKRSFLLDLLNATGKDSLTLVFVETKKGADSLEDFLYHEGYACTSIHGDRSQRDREEALHQFRSGKSPILVATAVAARGLDISNVKHVINFDLPSDIEEYVHRIGRTGRVGNLGLATSFFNERNINITKDLLDLLVEAKQEVPSWLENMAYEHHYKGSSRGRSKSSRFSGGFGARDYRQSSGASSSSFSSSRASSSRSGGGGHGSSRGFGGGGYGGFYNSDGYGGNYNSQGVDWWGN.

S2 is modified (N-acetylserine). The required for TBK1 and IKBKE-dependent IFNB1 activation stretch occupies residues 2-139 (SHVAVENALG…KSDEDDWSKP (138 aa)). The short motif at 12–21 (LDQQFAGLDL) is the Nuclear export signal element. A disordered region spans residues 19–144 (LDLNSSDNQS…DWSKPLPPSE (126 aa)). A compositionally biased stretch (polar residues) spans 21–34 (LNSSDNQSGGSTAS). An interaction with EIF4E region spans residues 38–44 (YIPPHLR). The segment covering 44–68 (RNREATKGFYDKDSSGWSSSKDKDA) has biased composition (basic and acidic residues). N6-acetyllysine is present on K55. Residues 70 to 89 (SSFGSRSDSRGKSSFFSDRG) show a composition bias toward low complexity. Positions 81-90 (KSSFFSDRGS) are interaction with VACV protein K7. S82, S86, and S90 each carry phosphoserine. Positions 88-123 (RGSGSRGRFDDRGRSDYDGIGSRGDRSGFGKFERGG) are involved in binding to RNA G-quadruplex. Residues 94–130 (GRFDDRGRSDYDGIGSRGDRSGFGKFERGGNSRWCDK) are compositionally biased toward basic and acidic residues. Positions 100-110 (GRSDYDGIGSR) are interaction with IKBKE. The interval 100–662 (GRSDYDGIGS…NSQGVDWWGN (563 aa)) is interaction with GSK3B. R101 is subject to Omega-N-methylarginine. S102 carries the phosphoserine; by IKKE modification. Y104 carries the phosphotyrosine modification. An Omega-N-methylarginine modification is found at R110. The residue at position 118 (K118) is an N6-acetyllysine. S131 is modified (phosphoserine). The segment at 139 to 172 (PLPPSERLEQELFSGGNTGINFEKYDDIPVEATG) is interaction with CHUK. A Q motif motif is present at residues 180–208 (ESFSDVEMGEIIMGNIELTRYTRPTPVQK). S181 is subject to Phosphoserine; by TBK1; in vitro. S183 is modified (phosphoserine; by TBK1). 200–207 (YTRPTPVQ) provides a ligand contact to ATP. A Helicase ATP-binding domain is found at 211-403 (IPIIKEKRDL…RDFLDEYIFL (193 aa)). A Glycyl lysine isopeptide (Lys-Gly) (interchain with G-Cter in SUMO2) cross-link involves residue K215. Residue 224-231 (AQTGSGKT) participates in ATP binding. S240 carries the post-translational modification Phosphoserine; by TBK1; in vitro. Residues 250–259 (ALRAMKENGR) are involved in stimulation of ATPase activity by DNA and RNA, nucleic acid binding and unwinding and HIV-1 replication. Phosphoserine; by TBK1; in vitro is present on S269. The DEAD box signature appears at 347–350 (DEAD). The interaction with HCV core protein stretch occupies residues 409–662 (GSTSENITQK…NSQGVDWWGN (254 aa)). Residues 414 to 575 (NITQKVVWVE…EVPSWLENMA (162 aa)) enclose the Helicase C-terminal domain. S429 is modified (phosphoserine; by CSNK1E and TBK1; in vitro). The residue at position 438 (T438) is a Phosphothreonine; by TBK1; in vitro. A phosphoserine; by TBK1; in vitro mark is found at S442 and S456. A Phosphothreonine; by CSNK1E; in vitro modification is found at T469. S470 bears the Phosphoserine; by CSNK1E; in vitro mark. S520 is modified (phosphoserine; by TBK1; in vitro). Residues 536–661 (GNLGLATSFF…YNSQGVDWWG (126 aa)) form an interaction with NXF1 region. T542 is subject to Phosphothreonine; by TBK1; in vitro. At S543 the chain carries Phosphoserine; by CSNK1E and TBK1; in vitro. R592 carries the post-translational modification Omega-N-methylarginine. Phosphoserine is present on residues S594, S605, and S612. Positions 601–634 (DYRQSSGASSSSFSSSRASSSRSGGGGHGSSRGF) are disordered. Residues 604 to 622 (QSSGASSSSFSSSRASSSR) are compositionally biased toward low complexity. Omega-N-methylarginine occurs at positions 617 and 632. Gly residues predominate over residues 623–634 (SGGGGHGSSRGF).

This sequence belongs to the DEAD box helicase family. DDX3/DED1 subfamily. Homodimer; can bind RNA as a monomer and as a dimer/oligomer. Interacts with TDRD3. Interacts (when phosphorylated at Ser-102) with IRF3; the interaction facilitates the phosphorylation and activation of IRF3 by IKBKE. Directly interacts with XPO1/CRM1. The interaction with XPO1/CMR1 is dependent on the DDX3X nuclear export signal motif and XPO1 interaction with GTPase RAN in its active GTP-bound form. Weakly interacts with TBKBP1/SINTBAD. Directly interacts with TRAF3; this interaction stimulates TRAF3 'Lys-63' ubiquitination. Interacts with CSNK1E in a Wnt-dependent manner; this interaction greatly enhances CSNK1E affinity for ATP, stimulates its kinase activity and promotes CSNK1E-mediated DVL2 phosphorylation. In the presence of RNA, the interaction is decreased. Also interacts with CSNK1D and stimulates its kinase activity. Interacts with TRPV4; this interaction is decreased when the TRPV4 channel is activated, leading to DDX3X relocalization to the nucleus. Interacts with MAP3K14/NIK. Directly interacts with CHUK/IKKA after physiological activation of the TLR7 and TLR8 pathways; this interaction enhances CHUK autophosphorylation. May associate with EIF4F complex, composed of at least EIF4A, EIF4E and EIF4G1/EIF4G3. Directly interacts with EIF4E in an RNA-independent manner; this interaction enhances EIF4E cap-binding ability. Directly interacts with EIF4G1 in an RNA-independent manner. DDX3X competes with EIF4G1 for interaction with EIF4E. Interacts with EIF4A1 and EIF2S1 in an RNA-independent manner. Associates with the eukaryotic translation initiation factor 3 (eIF-3) complex, including with EIF3B and EIF3C subunits. Directly interacts with IKBKE/IKKE; this interaction stimulates IKBKE activating autophosphorylation and is induced upon viral infection. Interacts with TBK1. Interacts with SP1; this interaction potentiates SP1-induced CDKN1A/WAF1/CIP1 transcription. Interacts with GSK3A and GSK3B. Interacts with several death receptors, inclusing FAS, TNFRSF10A and TNFRSF10B. Recruited to TNFRSF10B in the absence of receptor stimulation. When TNFRSF10B is stimulated, further recruited to the receptor and cleaved by caspases. A large proteolytic fragment remains associated with TNFRSF10B. Interacts (via C-terminus) with NXF1/TAP; this interaction may be partly involved in DDX3X nuclear export and in NXF1 localization to stress granules. Identified in an mRNP complex, composed of at least DHX9, DDX3X, ELAVL1, HNRNPU, IGF2BP1/2, ILF3, PABPC1, PCBP2, PTBP2, STAU1, STAU2, SYNCRIP and YBX1. The interaction with IGF2BP1/2 is RNA-dependent. Directly interacts with PABPC1/PABP1 in an RNA-independent manner. This interaction increases in stressed cells and decreases during cell recovery. Interacts (via C-terminus) with MAVS/IPS-1; this interaction occurs rapidly, but transiently after Sendai virus infection. The interaction potentiates MAVS-mediated IFNB induction. Interacts with ERCC6/CBS. Interacts with DHX33 in an RNA-independent manner. Interacts with DDX5 in the cytoplasm; this interaction may be more efficient when both proteins are unphosphorylated. Interacts with RIGI/RIG-1. Interacts with IFIH1/MDA5. Interacts with NCAPH; this interaction may be important for the NCAPH localization at condensing chromosomes during mitosis. Interacts with NLRP3 (via NACHT domain) under inflammasome-activating conditions. Interacts with CAPRIN1. Interacts with HNF4A and NR0B2/SHP in an RNA-independent manner; this interaction disrupts the interaction between HNF4 and NR0B2 that forms inactive heterodimers and enhances the formation of active HNF4 homodimers. Interacts with CREBBP/CBP. Interacts with EP300/p300. Interacts with gamma-tubulin. Interacts with phosphorylated TP53. Directly interacts with RELA/p65; this interaction may trap RELA in the cytoplasm, impairing nuclear relocalization upon TNF activating signals. In terms of assembly, (Microbial infection) Interacts with hepatitis B virus (HBV) polymerase in the cytoplasm; this interaction may inhibit DDX3X interaction with the IKBKE/TBK1 complex, and hence impair IKBKE/TBK1-mediated increase in IFNB production. As to quaternary structure, (Microbial infection) Directly interacts with hepatitis C virus (HCV) core protein in the cytoplasm. (Microbial infection) Interacts with vaccinia virus (VACV) protein K7. In terms of assembly, (Microbial infection) Interacts with HIV-1 protein Rev. As to quaternary structure, (Microbial infection) Interacts with Venezuelan equine encephalitis virus non-structural protein 3. In terms of processing, phosphorylated by TBK1; the phosphorylation is required for the synergistic induction of IFNB mediated by TBK1 and DDX3X. Phosphorylated by IKBKE at Ser-102 after ssRNA viral infection; enhances the induction of INFB promoter by IRF3. The cytoplasmic form is highly phosphorylated in the G1/S phase of the cell cycle and much less at G2/M. Phosphorylation by CSNK1E may inhibit RNA-stimulated ATPase activity. Post-translationally, upon stimulation of death receptors, including TNFRSF10B, recruited to receptors and cleaved by caspases. Proteolytic fragments remain associated with the receptors. This cleavage presumably inactivates DDX3X anti-apoptotic function. Ubiquitinated by RNF39 via 'Lys-48'-linked ubiquitination; leading to proteasomal degradation. In terms of tissue distribution, widely expressed. In testis, expressed in spermatids. Expressed in epidermis and liver (at protein level).

The protein resides in the cell membrane. Its subcellular location is the nucleus. It localises to the cytoplasm. The protein localises to the stress granule. It is found in the inflammasome. The protein resides in the cell projection. Its subcellular location is the lamellipodium. It localises to the cytoskeleton. The protein localises to the microtubule organizing center. It is found in the centrosome. It catalyses the reaction ATP + H2O = ADP + phosphate + H(+). Functionally, multifunctional ATP-dependent RNA helicase. The ATPase activity can be stimulated by various ribo-and deoxynucleic acids indicative for a relaxed substrate specificity. In vitro can unwind partially double-stranded DNA with a preference for 5'-single-stranded DNA overhangs. Binds RNA G-quadruplex (rG4s) structures, including those located in the 5'-UTR of NRAS mRNA. Involved in many cellular processes, which do not necessarily require its ATPase/helicase catalytic activities. Involved in transcription regulation. Positively regulates CDKN1A/WAF1/CIP1 transcription in an SP1-dependent manner, hence inhibits cell growth. This function requires its ATPase, but not helicase activity. CDKN1A up-regulation may be cell-type specific. Binds CDH1/E-cadherin promoter and represses its transcription. Potentiates HNF4A-mediated MTTP transcriptional activation; this function requires ATPase, but not helicase activity. Facilitates HNF4A acetylation, possibly catalyzed by CREBBP/EP300, thereby increasing the DNA-binding affinity of HNF4 to its response element. In addition, disrupts the interaction between HNF4 and SHP that forms inactive heterodimers and enhances the formation of active HNF4 homodimers. By promoting HNF4A-induced MTTP expression, may play a role in lipid homeostasis. May positively regulate TP53 transcription. Associates with mRNPs, predominantly with spliced mRNAs carrying an exon junction complex (EJC). Involved in the regulation of translation initiation. Not involved in the general process of translation, but promotes efficient translation of selected complex mRNAs, containing highly structured 5'-untranslated regions (UTR). This function depends on helicase activity. Might facilitate translation by resolving secondary structures of 5'-UTRs during ribosome scanning. Alternatively, may act prior to 43S ribosomal scanning and promote 43S pre-initiation complex entry to mRNAs exhibiting specific RNA motifs, by performing local remodeling of transcript structures located close to the cap moiety. Independently of its ATPase activity, promotes the assembly of functional 80S ribosomes and disassembles from ribosomes prior to the translation elongation process. Positively regulates the translation of cyclin E1/CCNE1 mRNA and consequently promotes G1/S-phase transition during the cell cycle. May activate TP53 translation. Required for endoplasmic reticulum stress-induced ATF4 mRNA translation. Independently of its ATPase/helicase activity, enhances IRES-mediated translation; this activity requires interaction with EIF4E. Independently of its ATPase/helicase activity, has also been shown specifically repress cap-dependent translation, possibly by acting on translation initiation factor EIF4E. Involved in innate immunity, acting as a viral RNA sensor. Binds viral RNAs and promotes the production of type I interferon (IFN-alpha and IFN-beta). Potentiate MAVS/RIGI-mediated induction of IFNB in early stages of infection. Enhances IFNB1 expression via IRF3/IRF7 pathway and participates in NFKB activation in the presence of MAVS and TBK1. Involved in TBK1 and IKBKE-dependent IRF3 activation leading to IFNB induction, acts as a scaffolding adapter that links IKBKE and IRF3 and coordinates their activation. Involved in the TLR7/TLR8 signaling pathway leading to type I interferon induction, including IFNA4 production. In this context, acts as an upstream regulator of IRF7 activation by MAP3K14/NIK and CHUK/IKKA. Stimulates CHUK autophosphorylation and activation following physiological activation of the TLR7 and TLR8 pathways, leading to MAP3K14/CHUK-mediated activatory phosphorylation of IRF7. Also stimulates MAP3K14/CHUK-dependent NF-kappa-B signaling. Negatively regulates TNF-induced IL6 and IL8 expression, via the NF-kappa-B pathway. May act by interacting with RELA/p65 and trapping it in the cytoplasm. May also bind IFNB promoter; the function is independent of IRF3. Involved in both stress and inflammatory responses. Independently of its ATPase/helicase activity, required for efficient stress granule assembly through its interaction with EIF4E, hence promotes survival in stressed cells. Independently of its helicase activity, regulates NLRP3 inflammasome assembly through interaction with NLRP3 and hence promotes cell death by pyroptosis during inflammation. This function is independent of helicase activity. Therefore DDX3X availability may be used to interpret stress signals and choose between pro-survival stress granules and pyroptotic NLRP3 inflammasomes and serve as a live-or-die checkpoint in stressed cells. In association with GSK3A/B, negatively regulates extrinsic apoptotic signaling pathway via death domain receptors, including TNFRSF10B, slowing down the rate of CASP3 activation following death receptor stimulation. Cleavage by caspases may inactivate DDX3X and relieve the inhibition. Independently of its ATPase/helicase activity, allosteric activator of CSNK1E. Stimulates CSNK1E-mediated phosphorylation of DVL2, thereby involved in the positive regulation of Wnt/beta-catenin signaling pathway. Also activates CSNK1A1 and CSNK1D in vitro, but it is uncertain if these targets are physiologically relevant. ATPase and casein kinase-activating functions are mutually exclusive. May be involved in mitotic chromosome segregation. In terms of biological role, (Microbial infection) Facilitates hepatitis C virus (HCV) replication. During infection, HCV core protein inhibits the interaction between MAVS and DDX3X and therefore impairs MAVS-dependent INFB induction and might recruit DDX3X to HCV replication complex. (Microbial infection) Facilitates HIV-1 replication. Acts as a cofactor for XPO1-mediated nuclear export of HIV-1 Rev RNAs. This function is strongly stimulated in the presence of TBK1 and requires DDX3X ATPase activity. Its function is as follows. (Microbial infection) Facilitates Zika virus (ZIKV) replication. Functionally, (Microbial infection) Facilitates Dengue virus (DENV) replication. In terms of biological role, (Microbial infection) Facilitates Venezuelan equine encephalitis virus (VEEV) replication. The chain is ATP-dependent RNA helicase DDX3X (DDX3X) from Homo sapiens (Human).